The chain runs to 157 residues: Ribosomal RNA large subunit methyltransferase H (157 aa).

Residues L73, G105, and 124 to 129 (LSKMTF) each bind S-adenosyl-L-methionine.

It belongs to the RNA methyltransferase RlmH family. Homodimer.

The protein resides in the cytoplasm. The catalysed reaction is pseudouridine(1915) in 23S rRNA + S-adenosyl-L-methionine = N(3)-methylpseudouridine(1915) in 23S rRNA + S-adenosyl-L-homocysteine + H(+). Functionally, specifically methylates the pseudouridine at position 1915 (m3Psi1915) in 23S rRNA. The sequence is that of Ribosomal RNA large subunit methyltransferase H from Christiangramia forsetii (strain DSM 17595 / CGMCC 1.15422 / KT0803) (Gramella forsetii).